The chain runs to 49 residues: Small ribosomal subunit protein uS19c (49 aa).

It belongs to the universal ribosomal protein uS19 family.

It is found in the plastid. Its subcellular location is the chloroplast. Protein S19 forms a complex with S13 that binds strongly to the 16S ribosomal RNA. This Sinapis alba (White mustard) protein is Small ribosomal subunit protein uS19c (rps19).